Here is a 105-residue protein sequence, read N- to C-terminus: Fungal protease inhibitor-1 (105 aa).

Positions 1-19 (MKAVITLLFLACILVVTYG) are cleaved as a signal peptide. 6 cysteine pairs are disulfide-bonded: C23/C56, C28/C58, C33/C59, C42/C62, C72/C93, and C87/C98.

In terms of biological role, inhibits proteases from the fungi A.oryzae and R.oryzae, trypsin and chymotrypsin. Does not inhibit protease from the bacterium B.licheniformis or papain. The sequence is that of Fungal protease inhibitor-1 from Antheraea mylitta (Tasar silkworm).